The following is an 848-amino-acid chain: Adenylate cyclase (848 aa).

The tract at residues 1–535 (MYLYIETLKQ…DVSHHFPLRL (535 aa)) is catalytic. The segment at 541–848 (KALYSPCEIR…DTPLLQQYFS (308 aa)) is regulatory. His-609 is modified (phosphohistidine; by CRR).

This sequence belongs to the adenylyl cyclase class-1 family.

It is found in the cytoplasm. The catalysed reaction is ATP = 3',5'-cyclic AMP + diphosphate. The protein is Adenylate cyclase (cyaA) of Shigella flexneri.